The following is a 334-amino-acid chain: Holliday junction branch migration complex subunit RuvB (334 aa).

Residues alanine 4–tyrosine 184 are large ATPase domain (RuvB-L). ATP contacts are provided by residues isoleucine 23, arginine 24, glycine 65, lysine 68, threonine 69, threonine 70, glutamate 131 to tyrosine 133, arginine 174, tyrosine 184, and arginine 221. Position 69 (threonine 69) interacts with Mg(2+). The interval glutamine 185–asparagine 255 is small ATPAse domain (RuvB-S). Residues alanine 258 to glutamate 334 form a head domain (RuvB-H) region. Residues arginine 294, arginine 313, and arginine 318 each coordinate DNA.

This sequence belongs to the RuvB family. In terms of assembly, homohexamer. Forms an RuvA(8)-RuvB(12)-Holliday junction (HJ) complex. HJ DNA is sandwiched between 2 RuvA tetramers; dsDNA enters through RuvA and exits via RuvB. An RuvB hexamer assembles on each DNA strand where it exits the tetramer. Each RuvB hexamer is contacted by two RuvA subunits (via domain III) on 2 adjacent RuvB subunits; this complex drives branch migration. In the full resolvosome a probable DNA-RuvA(4)-RuvB(12)-RuvC(2) complex forms which resolves the HJ.

It is found in the cytoplasm. The enzyme catalyses ATP + H2O = ADP + phosphate + H(+). Functionally, the RuvA-RuvB-RuvC complex processes Holliday junction (HJ) DNA during genetic recombination and DNA repair, while the RuvA-RuvB complex plays an important role in the rescue of blocked DNA replication forks via replication fork reversal (RFR). RuvA specifically binds to HJ cruciform DNA, conferring on it an open structure. The RuvB hexamer acts as an ATP-dependent pump, pulling dsDNA into and through the RuvAB complex. RuvB forms 2 homohexamers on either side of HJ DNA bound by 1 or 2 RuvA tetramers; 4 subunits per hexamer contact DNA at a time. Coordinated motions by a converter formed by DNA-disengaged RuvB subunits stimulates ATP hydrolysis and nucleotide exchange. Immobilization of the converter enables RuvB to convert the ATP-contained energy into a lever motion, pulling 2 nucleotides of DNA out of the RuvA tetramer per ATP hydrolyzed, thus driving DNA branch migration. The RuvB motors rotate together with the DNA substrate, which together with the progressing nucleotide cycle form the mechanistic basis for DNA recombination by continuous HJ branch migration. Branch migration allows RuvC to scan DNA until it finds its consensus sequence, where it cleaves and resolves cruciform DNA. The chain is Holliday junction branch migration complex subunit RuvB from Yersinia enterocolitica serotype O:8 / biotype 1B (strain NCTC 13174 / 8081).